Reading from the N-terminus, the 102-residue chain is Small ribosomal subunit protein uS10 (102 aa).

The protein belongs to the universal ribosomal protein uS10 family. Part of the 30S ribosomal subunit.

Its function is as follows. Involved in the binding of tRNA to the ribosomes. The sequence is that of Small ribosomal subunit protein uS10 from Mesoplasma florum (strain ATCC 33453 / NBRC 100688 / NCTC 11704 / L1) (Acholeplasma florum).